The primary structure comprises 357 residues: Tetraacyldisaccharide 4'-kinase (357 aa).

54 to 61 (TVGGAGKT) is a binding site for ATP.

It belongs to the LpxK family.

It catalyses the reaction a lipid A disaccharide + ATP = a lipid IVA + ADP + H(+). The protein operates within glycolipid biosynthesis; lipid IV(A) biosynthesis; lipid IV(A) from (3R)-3-hydroxytetradecanoyl-[acyl-carrier-protein] and UDP-N-acetyl-alpha-D-glucosamine: step 6/6. Functionally, transfers the gamma-phosphate of ATP to the 4'-position of a tetraacyldisaccharide 1-phosphate intermediate (termed DS-1-P) to form tetraacyldisaccharide 1,4'-bis-phosphate (lipid IVA). The sequence is that of Tetraacyldisaccharide 4'-kinase from Rhizobium leguminosarum bv. trifolii (strain WSM2304).